A 250-amino-acid chain; its full sequence is Ubiquinone/menaquinone biosynthesis C-methyltransferase UbiE (250 aa).

Residues Ser-73, Asp-94, and 122–123 each bind S-adenosyl-L-methionine; that span reads NA.

This sequence belongs to the class I-like SAM-binding methyltransferase superfamily. MenG/UbiE family.

The enzyme catalyses a 2-demethylmenaquinol + S-adenosyl-L-methionine = a menaquinol + S-adenosyl-L-homocysteine + H(+). The catalysed reaction is a 2-methoxy-6-(all-trans-polyprenyl)benzene-1,4-diol + S-adenosyl-L-methionine = a 5-methoxy-2-methyl-3-(all-trans-polyprenyl)benzene-1,4-diol + S-adenosyl-L-homocysteine + H(+). It functions in the pathway quinol/quinone metabolism; menaquinone biosynthesis; menaquinol from 1,4-dihydroxy-2-naphthoate: step 2/2. Its pathway is cofactor biosynthesis; ubiquinone biosynthesis. Methyltransferase required for the conversion of demethylmenaquinol (DMKH2) to menaquinol (MKH2) and the conversion of 2-polyprenyl-6-methoxy-1,4-benzoquinol (DDMQH2) to 2-polyprenyl-3-methyl-6-methoxy-1,4-benzoquinol (DMQH2). The protein is Ubiquinone/menaquinone biosynthesis C-methyltransferase UbiE of Legionella pneumophila (strain Paris).